Reading from the N-terminus, the 495-residue chain is F(420)H(2) dehydrogenase subunit M (495 aa).

The next 15 helical transmembrane spans lie at 1 to 21 (MLPVASLLILVPLIFAVVTFF), 27 to 47 (LAAGFGFLGSLATLGLTLYAY), 57 to 77 (MQFYESVSWIPFLGVNYSVGI), 80 to 100 (VSMPLILLNAIVIPFMILFTW), 108 to 128 (NRFYGLILTMQAAVIGVFVAL), 130 to 150 (FVVFYIFWELTLVPLFFIVNL), 163 to 183 (FFIYTHVASLVMLLGIFGLFY), 215 to 235 (IFLAILFGFLAKLPAFPFHSW), 249 to 269 (ILFILLKIGGYGLFRISLPML), 277 to 297 (LMIMILGLLGSVSILYGALLA), 315 to 335 (MGYVILGSAGLVTLSVSGAMF), 338 to 358 (FSHGLIMSIMFMSAGAIQTAA), 378 to 398 (VAMMVGFMASLGLPGLTGFIA), 412 to 432 (VFVVIALLAIVVTAGYHLWAM), and 450 to 470 (INSIQVFSMAVIALLVLYFGL).

This sequence belongs to the complex I subunit 4 family. The FPO complex is composed of at least 13 different subunits. FpoA, FpoH, FpoJ, FpoK, FpoL, FpoM and FpoN proteins constitute the membrane sector of the complex.

The protein resides in the cell membrane. The enzyme catalyses methanophenazine + reduced coenzyme F420-(gamma-L-Glu)(n) = dihydromethanophenazine + oxidized coenzyme F420-(gamma-L-Glu)(n) + H(+). Its function is as follows. Component of the F(420)H(2) dehydrogenase (FPO complex) which is part of the energy-conserving F(420)H(2):heterodisulfide oxidoreductase system. The membrane-bound electron transfer system of the complex plays an important role in the metabolism of methylotrophic methanogens when the organisms grow on methanol or methylamines. Catalyzes the oxidation of methanophenazine to dihydromethanophenazine. It shuttles electrons from F(420)H(2), via FAD and iron-sulfur (Fe-S) centers, to methanophenazine (an electron carrier in the membrane). It couples the redox reaction to proton translocation (for every two electrons transferred, two hydrogen ions are translocated across the cytoplasmic membrane), and thus conserves the redox energy in a proton gradient. It also catalyzes the oxidation of F(420)H(2) with quinones such as 2,3-dimethyl-1,4-naphthoquinone, 2-methyl-1,4-naphthoquinone and tetramethyl-p-benzoquinone. This Methanosarcina mazei (strain ATCC BAA-159 / DSM 3647 / Goe1 / Go1 / JCM 11833 / OCM 88) (Methanosarcina frisia) protein is F(420)H(2) dehydrogenase subunit M (fpoM).